A 52-amino-acid polypeptide reads, in one-letter code: Metallothionein-2 (52 aa).

2 consecutive repeats follow at residues 43 to 47 and 48 to 52; these read QTCKC.

Belongs to the metallothionein superfamily. Type 10 family.

In terms of biological role, the metallothioneins are involved in the cellular sequestration of toxic metal ions. The protein is Metallothionein-2 (MT-II) of Candida glabrata (strain ATCC 2001 / BCRC 20586 / JCM 3761 / NBRC 0622 / NRRL Y-65 / CBS 138) (Yeast).